Here is a 581-residue protein sequence, read N- to C-terminus: Spastin (581 aa).

Basic residues predominate over residues 1–12 (MSSPAGRRKKKG). Positions 1–39 (MSSPAGRRKKKGSGGASPAPARPPPPAAVPAPAAGPAPA) are disordered. Residues 1–48 (MSSPAGRRKKKGSGGASPAPARPPPPAAVPAPAAGPAPAPGSPHKRNL) are required for nuclear localization. The Cytoplasmic portion of the chain corresponds to 1–54 (MSSPAGRRKKKGSGGASPAPARPPPPAAVPAPAAGPAPAPGSPHKRNLYYFSYP). The interval 1–78 (MSSPAGRRKK…LGLLFVWLCQ (78 aa)) is required for interaction with ATL1. The required for midbody localization stretch occupies residues 1 to 191 (MSSPAGRRKK…LVMAKDRLQL (191 aa)). Residues 1–265 (MSSPAGRRKK…GTSKPNRTNK (265 aa)) form a required for interaction with RTN1 region. Positions 4-11 (PAGRRKKK) match the Nuclear localization signal motif. Over residues 20-39 (PARPPPPAAVPAPAAGPAPA) the composition is skewed to pro residues. A required for interaction with SSNA1 and microtubules region spans residues 48–85 (LYYFSYPLVVGFALLRLLACHLGLLFVWLCQRFSRALM). Positions 55–75 (LVVGFALLRLLACHLGLLFVW) form an intramembrane region, helical. The Nuclear export signal signature appears at 57 to 65 (VGFALLRLL). Residues 76-581 (LCQRFSRALM…WNKDFGDTTV (506 aa)) lie on the Cytoplasmic side of the membrane. The tract at residues 90 to 111 (SSGTAPAPASPSTPAPGPGGEA) is disordered. Over residues 97-106 (PASPSTPAPG) the composition is skewed to pro residues. In terms of domain architecture, MIT spans 118–192 (HKQAFEYISI…VMAKDRLQLL (75 aa)). Residues 193–581 (ESGAVPKKKD…WNKDFGDTTV (389 aa)) are sufficient for microtubule severing. The tract at residues 195–277 (GAVPKKKDPL…TPTTAVRKKK (83 aa)) is disordered. Over residues 206–225 (HASNSLPRSKTVMKSGSTGL) the composition is skewed to polar residues. Residues Ser210 and Ser233 each carry the phosphoserine modification. A required for interaction with microtubules and microtubule severing region spans residues 235-293 (SGLSMVSGARPGSGPAATTHKGTSKPNRTNKPSTPTTAVRKKKDLKNFRNVDSNLANLI). Residues 254–271 (HKGTSKPNRTNKPSTPTT) show a composition bias toward polar residues. Position 271 is a phosphothreonine (Thr271). Positions 274-277 (RKKK) match the Nuclear localization signal motif. ATP is bound at residue 347–354 (GPPGNGKT). Ser562 carries the phosphoserine modification.

This sequence belongs to the AAA ATPase family. Spastin subfamily. In terms of assembly, homohexamer. Mostly monomeric, but assembles into hexameric structure for short periods of time. Oligomerization seems to be a prerequisite for catalytic activity. Binding to ATP in a cleft between two adjacent subunits stabilizes the homohexameric form. Binds to microtubules at least in part via the alpha-tubulin and beta-tubulin tails. The hexamer adopts a ring conformation through which microtubules pass prior to being severed. Does not interact strongly with tubulin heterodimers. Interacts (via MIT domain) with CHMP1B; the interaction is direct. Interacts with SSNA1. Interacts with ATL1. Interacts with RTN1. Interacts with ZFYVE27. Interacts with REEP1. Interacts (via MIT domain) with IST1.

It localises to the membrane. Its subcellular location is the endoplasmic reticulum. The protein localises to the midbody. The protein resides in the cytoplasm. It is found in the cytoskeleton. It localises to the microtubule organizing center. Its subcellular location is the centrosome. The protein localises to the perinuclear region. The protein resides in the nucleus. It is found in the spindle. It localises to the cell projection. Its subcellular location is the axon. It catalyses the reaction n ATP + n H2O + a microtubule = n ADP + n phosphate + (n+1) alpha/beta tubulin heterodimers.. Allosteric enzyme with a cooperative mechanism; at least two neighbor subunits influence each other strongly in spastin hexamers. Microtubule binding promotes cooperative interactions among spastin subunits. Its function is as follows. ATP-dependent microtubule severing protein that specifically recognizes and cuts microtubules that are polyglutamylated. Preferentially recognizes and acts on microtubules decorated with short polyglutamate tails: severing activity increases as the number of glutamates per tubulin rises from one to eight, but decreases beyond this glutamylation threshold. Severing activity is not dependent on tubulin acetylation or detyrosination. Microtubule severing promotes reorganization of cellular microtubule arrays and the release of microtubules from the centrosome following nucleation. It is critical for the biogenesis and maintenance of complex microtubule arrays in axons, spindles and cilia. SPAST is involved in abscission step of cytokinesis and nuclear envelope reassembly during anaphase in cooperation with the ESCRT-III complex. Recruited at the midbody, probably by IST1, and participates in membrane fission during abscission together with the ESCRT-III complex. Recruited to the nuclear membrane by IST1 and mediates microtubule severing, promoting nuclear envelope sealing and mitotic spindle disassembly during late anaphase. Required for membrane traffic from the endoplasmic reticulum (ER) to the Golgi and endosome recycling. Recruited by IST1 to endosomes and regulates early endosomal tubulation and recycling by mediating microtubule severing. Probably plays a role in axon growth and the formation of axonal branches. The polypeptide is Spastin (Rattus norvegicus (Rat)).